The chain runs to 340 residues: Serine racemase (340 aa).

Residue Glu-13 coordinates Mg(2+). 5 residues coordinate ATP: Ser-31, Ser-32, Ile-33, Lys-51, and Thr-52. Lys-56 functions as the Proton acceptor in the catalytic mechanism. Position 56 is an N6-(pyridoxal phosphate)lysine (Lys-56). Ca(2+) contacts are provided by Pro-69 and Thr-81. Ser-84 (proton acceptor) is an active-site residue. Asn-86 provides a ligand contact to pyridoxal 5'-phosphate. Residue Gln-89 participates in ATP binding. S-nitrosocysteine is present on Cys-113. An ATP-binding site is contributed by Tyr-121. Asn-154 is a pyridoxal 5'-phosphate binding site. Asp-178 serves as a coordination point for Mg(2+). 5 residues coordinate pyridoxal 5'-phosphate: Gly-185, Gly-186, Gly-187, Gly-188, and Met-189. Residues Glu-210, Ala-214, Asp-216, and Asn-247 each contribute to the Mg(2+) site. Residues Glu-210, Ala-214, Asp-216, and Asn-247 each coordinate Ca(2+). Residues Glu-210, Ala-214, and Asp-216 each contribute to the Mn(2+) site. Lys-279 is an ATP binding site. Residue Ser-313 participates in pyridoxal 5'-phosphate binding. Asn-316 contacts ATP.

This sequence belongs to the serine/threonine dehydratase family. In terms of assembly, homodimer. Requires Mg(2+) as cofactor. The cofactor is Mn(2+). It depends on Ca(2+) as a cofactor. Pyridoxal 5'-phosphate is required as a cofactor. S-nitrosylated, leading to decrease the enzyme activity. As to expression, expressed in the cerebellum, hippocampus, dorsolateral prefrontal cortex, and in motor neurons and glial cells of the lumbar spinal cord (at protein level). Increased in the dorsolateral prefrontal cortex of schizophrenic patients (at protein level). Brain: expressed at high levels in hippocampus and corpus callosum, intermediate levels in substantia nigra and caudate, and low levels in amygdala, thalamus, and subthalamic nuclei. Expressed in heart, skeletal muscle, kidney, and liver.

The catalysed reaction is L-serine = D-serine. It carries out the reaction D-serine = pyruvate + NH4(+). The enzyme catalyses L-serine = pyruvate + NH4(+). With respect to regulation, allosterically activated by magnesium, and possibly also other divalent metal cations. Allosterically activated by ATP, ADP or GTP. Competitively inhibited by malonate. Inhibited by meso-tartrate and malonate. Its function is as follows. Catalyzes the synthesis of D-serine from L-serine. D-serine is a key coagonist with glutamate at NMDA receptors. Has dehydratase activity towards both L-serine and D-serine. The polypeptide is Serine racemase (SRR) (Homo sapiens (Human)).